The following is an 846-amino-acid chain: Translation initiation factor IF-2 (846 aa).

Positions 198 to 219 (YKREEEEKKSKAKKAGGKGFKK) are disordered. Basic residues predominate over residues 207–219 (SKAKKAGGKGFKK). Residues 345 to 512 (SRAPVVTIMG…AVLLQSEVLE (168 aa)) form the tr-type G domain. Positions 354-361 (GHVDHGKT) are G1. 354 to 361 (GHVDHGKT) contacts GTP. The G2 stretch occupies residues 379 to 383 (GITQH). The interval 400-403 (DTPG) is G3. Residues 400-404 (DTPGH) and 454-457 (NKID) each bind GTP. Residues 454–457 (NKID) are G4. Positions 490–492 (SAK) are G5.

This sequence belongs to the TRAFAC class translation factor GTPase superfamily. Classic translation factor GTPase family. IF-2 subfamily.

The protein resides in the cytoplasm. One of the essential components for the initiation of protein synthesis. Protects formylmethionyl-tRNA from spontaneous hydrolysis and promotes its binding to the 30S ribosomal subunits. Also involved in the hydrolysis of GTP during the formation of the 70S ribosomal complex. The polypeptide is Translation initiation factor IF-2 (Francisella tularensis subsp. tularensis (strain SCHU S4 / Schu 4)).